The sequence spans 573 residues: Proline--tRNA ligase (573 aa).

This sequence belongs to the class-II aminoacyl-tRNA synthetase family. ProS type 1 subfamily. As to quaternary structure, homodimer.

The protein localises to the cytoplasm. It carries out the reaction tRNA(Pro) + L-proline + ATP = L-prolyl-tRNA(Pro) + AMP + diphosphate. Catalyzes the attachment of proline to tRNA(Pro) in a two-step reaction: proline is first activated by ATP to form Pro-AMP and then transferred to the acceptor end of tRNA(Pro). As ProRS can inadvertently accommodate and process non-cognate amino acids such as alanine and cysteine, to avoid such errors it has two additional distinct editing activities against alanine. One activity is designated as 'pretransfer' editing and involves the tRNA(Pro)-independent hydrolysis of activated Ala-AMP. The other activity is designated 'posttransfer' editing and involves deacylation of mischarged Ala-tRNA(Pro). The misacylated Cys-tRNA(Pro) is not edited by ProRS. This Limosilactobacillus fermentum (strain NBRC 3956 / LMG 18251) (Lactobacillus fermentum) protein is Proline--tRNA ligase.